Reading from the N-terminus, the 169-residue chain is uncharacterized protein (169 aa).

The transit peptide at 1–91 (MFSSTFRRLA…NKEQYTVRCL (91 aa)) directs the protein to the mitochondrion. Residues 54 to 76 (PQPKSPGSLPSSTRTAPNPNGEE) are disordered. Residues 61 to 71 (SLPSSTRTAPN) are compositionally biased toward polar residues.

Its subcellular location is the mitochondrion. This is an uncharacterized protein from Trypanosoma brucei brucei (strain 927/4 GUTat10.1).